Consider the following 572-residue polypeptide: Golgi apyrase (572 aa).

Over 1-470 (MVRKYGIFID…KHWMRLFPNK (470 aa)) the chain is Lumenal. The active-site Proton acceptor is Glu-145. A helical membrane pass occupies residues 471–491 (LFFILSFIFCLFFLFSLVLFG). Topologically, residues 492–572 (YDPKRRQRFK…RERTPRSPFP (81 aa)) are cytoplasmic.

Belongs to the GDA1/CD39 NTPase family. Ca(2+) serves as cofactor. It depends on Mg(2+) as a cofactor. The cofactor is Mn(2+).

The protein localises to the golgi apparatus. The protein resides in the membrane. The catalysed reaction is a ribonucleoside 5'-triphosphate + 2 H2O = a ribonucleoside 5'-phosphate + 2 phosphate + 2 H(+). Its pathway is protein modification; protein glycosylation. Catalyzes the hydrolysis of phosphoanhydride bonds of nucleoside tri- and di-phosphates. Required for Golgi glycosylation and cell wall integrity. Involved in N-mannosylation of proteins in Golgi. The polypeptide is Golgi apyrase (Schizosaccharomyces pombe (strain 972 / ATCC 24843) (Fission yeast)).